Here is a 97-residue protein sequence, read N- to C-terminus: Large ribosomal subunit protein bL27 (97 aa).

The propeptide occupies 1–12; sequence MLKMNLANLQLF. The tract at residues 14–38 is disordered; that stretch reads HKKGGGSTSNGRDSESKRLGAKAAD.

This sequence belongs to the bacterial ribosomal protein bL27 family. In terms of processing, the N-terminus is cleaved by ribosomal processing cysteine protease Prp.

This Streptococcus mutans serotype c (strain ATCC 700610 / UA159) protein is Large ribosomal subunit protein bL27.